The chain runs to 421 residues: ATP-dependent RNA helicase RhlB (421 aa).

Residues 9–37 carry the Q motif motif; that stretch reads QKFSDFALHPQVVEALEKKGFYNCTPIQA. Residues 40–219 form the Helicase ATP-binding domain; the sequence is LPLTLAGRDV…FEQMNNAEYV (180 aa). An ATP-binding site is contributed by 53 to 60; it reads AQTGTGKT. A DEAD box motif is present at residues 165–168; sequence DEAD. Positions 245–390 constitute a Helicase C-terminal domain; that stretch reads RLLQTLIEEE…VSKYNPEALM (146 aa). Residues 396 to 421 form a disordered region; that stretch reads PLRLTRSRPGNGPRRAGAPRNRRRSG. The span at 402–414 shows a compositional bias: low complexity; sequence SRPGNGPRRAGAP.

The protein belongs to the DEAD box helicase family. RhlB subfamily. As to quaternary structure, component of the RNA degradosome, which is a multiprotein complex involved in RNA processing and mRNA degradation.

The protein localises to the cytoplasm. The enzyme catalyses ATP + H2O = ADP + phosphate + H(+). Functionally, DEAD-box RNA helicase involved in RNA degradation. Has RNA-dependent ATPase activity and unwinds double-stranded RNA. The polypeptide is ATP-dependent RNA helicase RhlB (Salmonella paratyphi A (strain AKU_12601)).